The sequence spans 494 residues: GlcNAc-binding protein A (494 aa).

Residues 1–21 (MKLNKIMLAMVVMSISGTAMA) form the signal peptide. The Chitin-binding type-4 domain maps to 22–192 (HGYIENPPSR…TFYNMIDAEF (171 aa)). Positions 435–484 (APAWSNKSSYQAKDTVTHNGRIYMSKWWADKASVPGDAAVTDTTGNGSGW) constitute a Chitin-binding type-3 domain. Residues 474-494 (VTDTTGNGSGWGKVWEDKGAC) are disordered.

It belongs to the GbpA family.

The protein localises to the secreted. Its function is as follows. Probably interacts with GlcNAc residues. May promote attachment to both epithelial cell surfaces and chitin. The chain is GlcNAc-binding protein A from Yersinia enterocolitica serotype O:8 / biotype 1B (strain NCTC 13174 / 8081).